The following is a 91-amino-acid chain: DNA-binding protein HU (91 aa).

The protein belongs to the bacterial histone-like protein family.

Functionally, histone-like DNA-binding protein which is capable of wrapping DNA to stabilize it, and thus to prevent its denaturation under extreme environmental conditions. Also seems to act as a fortuitous virulence factor in delayed sequelae by binding to heparan sulfate-proteoglycans in the extracellular matrix of target organs and acting as a nidus for in situ immune complex formation. In Streptococcus pyogenes serotype M1, this protein is DNA-binding protein HU (hup).